The chain runs to 117 residues: Immunoglobulin kappa variable 1-9 (117 aa).

The first 22 residues, 1-22, serve as a signal peptide directing secretion; sequence MDMRVPAQLLGLLLLWLPGARC. The tract at residues 23-45 is framework-1; it reads DIQLTQSPSFLSASVGDRVTITC. Positions 24 to 117 constitute an Ig-like domain; the sequence is IQLTQSPSFL…YYCQQLNSYP (94 aa). Cysteines 45 and 110 form a disulfide. The complementarity-determining-1 stretch occupies residues 46–56; sequence RASQGISSYLA. The framework-2 stretch occupies residues 57 to 71; the sequence is WYQQKPGKAPKLLIY. Residues 72 to 78 form a complementarity-determining-2 region; sequence AASTLQS. Residues 79 to 110 are framework-3; that stretch reads GVPSRFSGSGSGTEFTLTISSLQPEDFATYYC. The interval 111–117 is complementarity-determining-3; it reads QQLNSYP.

Immunoglobulins are composed of two identical heavy chains and two identical light chains; disulfide-linked.

Its subcellular location is the secreted. It localises to the cell membrane. Its function is as follows. V region of the variable domain of immunoglobulin light chains that participates in the antigen recognition. Immunoglobulins, also known as antibodies, are membrane-bound or secreted glycoproteins produced by B lymphocytes. In the recognition phase of humoral immunity, the membrane-bound immunoglobulins serve as receptors which, upon binding of a specific antigen, trigger the clonal expansion and differentiation of B lymphocytes into immunoglobulins-secreting plasma cells. Secreted immunoglobulins mediate the effector phase of humoral immunity, which results in the elimination of bound antigens. The antigen binding site is formed by the variable domain of one heavy chain, together with that of its associated light chain. Thus, each immunoglobulin has two antigen binding sites with remarkable affinity for a particular antigen. The variable domains are assembled by a process called V-(D)-J rearrangement and can then be subjected to somatic hypermutations which, after exposure to antigen and selection, allow affinity maturation for a particular antigen. In Homo sapiens (Human), this protein is Immunoglobulin kappa variable 1-9.